The primary structure comprises 285 residues: Bifunctional protein FolD (285 aa).

Residues 166–168 (GAS) and I232 contribute to the NADP(+) site.

The protein belongs to the tetrahydrofolate dehydrogenase/cyclohydrolase family. Homodimer.

The catalysed reaction is (6R)-5,10-methylene-5,6,7,8-tetrahydrofolate + NADP(+) = (6R)-5,10-methenyltetrahydrofolate + NADPH. It carries out the reaction (6R)-5,10-methenyltetrahydrofolate + H2O = (6R)-10-formyltetrahydrofolate + H(+). The protein operates within one-carbon metabolism; tetrahydrofolate interconversion. With respect to regulation, the NAD(+)-dependent dehydrogenase is activated by inorganic phosphate. Its function is as follows. Catalyzes the oxidation of 5,10-methylenetetrahydrofolate to 5,10-methenyltetrahydrofolate and then the hydrolysis of 5,10-methenyltetrahydrofolate to 10-formyltetrahydrofolate. In Photobacterium phosphoreum, this protein is Bifunctional protein FolD.